The sequence spans 293 residues: Nucleotide-binding protein LBA0691 (293 aa).

Position 13–20 (13–20 (GMSGAGKT)) interacts with ATP. Residue 63–66 (DLRV) participates in GTP binding.

The protein belongs to the RapZ-like family.

Functionally, displays ATPase and GTPase activities. In Lactobacillus acidophilus (strain ATCC 700396 / NCK56 / N2 / NCFM), this protein is Nucleotide-binding protein LBA0691.